The sequence spans 269 residues: Orotidine 5'-phosphate decarboxylase (269 aa).

Lys-92 functions as the Proton donor in the catalytic mechanism.

This sequence belongs to the OMP decarboxylase family. Type 2 subfamily.

It carries out the reaction orotidine 5'-phosphate + H(+) = UMP + CO2. Its pathway is pyrimidine metabolism; UMP biosynthesis via de novo pathway; UMP from orotate: step 2/2. The chain is Orotidine 5'-phosphate decarboxylase from Natronomonas pharaonis (strain ATCC 35678 / DSM 2160 / CIP 103997 / JCM 8858 / NBRC 14720 / NCIMB 2260 / Gabara) (Halobacterium pharaonis).